The following is a 229-amino-acid chain: Internal virion protein gp7 (229 aa).

Residues 1-20 (MLYAFTLGRKLRGEEPSYPE) constitute a propeptide, removed in mature form.

This sequence belongs to the podoviruses gp7 family. Interacts with the internal virion protein gp20; this interaction forms a tube-like structure that may allow DNA ejection through the host membranes.

It is found in the virion. In terms of biological role, inner capsid protein that plays a role in viral DNA ejection into the host cell. Assembles into an extracellular trans-envelope channel completed by the internal virion proteins gp7 and probably gp16. This channel allows the delivery of the viral genome into the cell cytoplasm. Displays membrane-association properties, may therefore form a simple channel spanning the outer membrane. The chain is Internal virion protein gp7 (7) from Salmonella phage P22 (Bacteriophage P22).